A 305-amino-acid polypeptide reads, in one-letter code: D-alanine--D-alanine ligase (305 aa).

One can recognise an ATP-grasp domain in the interval lysine 107–glutamine 299. Proline 134–glutamine 185 contributes to the ATP binding site. Residues aspartate 253, glutamate 266, and asparagine 268 each contribute to the Mg(2+) site.

It belongs to the D-alanine--D-alanine ligase family. Requires Mg(2+) as cofactor. Mn(2+) serves as cofactor.

Its subcellular location is the cytoplasm. It catalyses the reaction 2 D-alanine + ATP = D-alanyl-D-alanine + ADP + phosphate + H(+). Its pathway is cell wall biogenesis; peptidoglycan biosynthesis. Its function is as follows. Cell wall formation. This Citrifermentans bemidjiense (strain ATCC BAA-1014 / DSM 16622 / JCM 12645 / Bem) (Geobacter bemidjiensis) protein is D-alanine--D-alanine ligase.